We begin with the raw amino-acid sequence, 364 residues long: Alanine racemase (364 aa).

K34 serves as the catalytic Proton acceptor; specific for D-alanine. The residue at position 34 (K34) is an N6-(pyridoxal phosphate)lysine. R129 is a binding site for substrate. Y259 (proton acceptor; specific for L-alanine) is an active-site residue. Position 307 (M307) interacts with substrate.

Belongs to the alanine racemase family. Pyridoxal 5'-phosphate serves as cofactor.

It carries out the reaction L-alanine = D-alanine. It participates in amino-acid biosynthesis; D-alanine biosynthesis; D-alanine from L-alanine: step 1/1. Catalyzes the interconversion of L-alanine and D-alanine. May also act on other amino acids. The polypeptide is Alanine racemase (alr) (Coxiella burnetii (strain CbuG_Q212) (Coxiella burnetii (strain Q212))).